Here is a 350-residue protein sequence, read N- to C-terminus: Biotin synthase (350 aa).

Residues 41–268 (NEVQVSRLLS…KSRVRLSAGR (228 aa)) enclose the Radical SAM core domain. Positions 56, 60, and 63 each coordinate [4Fe-4S] cluster. Residues cysteine 100, cysteine 131, cysteine 191, and arginine 263 each coordinate [2Fe-2S] cluster.

Belongs to the radical SAM superfamily. Biotin synthase family. As to quaternary structure, homodimer. It depends on [4Fe-4S] cluster as a cofactor. [2Fe-2S] cluster is required as a cofactor.

It catalyses the reaction (4R,5S)-dethiobiotin + (sulfur carrier)-SH + 2 reduced [2Fe-2S]-[ferredoxin] + 2 S-adenosyl-L-methionine = (sulfur carrier)-H + biotin + 2 5'-deoxyadenosine + 2 L-methionine + 2 oxidized [2Fe-2S]-[ferredoxin]. It participates in cofactor biosynthesis; biotin biosynthesis; biotin from 7,8-diaminononanoate: step 2/2. Catalyzes the conversion of dethiobiotin (DTB) to biotin by the insertion of a sulfur atom into dethiobiotin via a radical-based mechanism. This chain is Biotin synthase, found in Shewanella pealeana (strain ATCC 700345 / ANG-SQ1).